Here is a 136-residue protein sequence, read N- to C-terminus: Large ribosomal subunit protein uL16c (136 aa).

The segment covering 1 to 17 has biased composition (basic residues); it reads MLSPKRVKFRKQHRGRM. Residues 1 to 25 form a disordered region; sequence MLSPKRVKFRKQHRGRMKGISTRGN.

Belongs to the universal ribosomal protein uL16 family. As to quaternary structure, part of the 50S ribosomal subunit.

The protein resides in the plastid. Its subcellular location is the chloroplast. This Anthoceros angustus (Hornwort) protein is Large ribosomal subunit protein uL16c.